The primary structure comprises 494 residues: Zinc metalloproteinase/disintegrin (494 aa).

The signal sequence occupies residues 1-20 (MIQVLLVTICLAVFPFQGSS). The propeptide occupies 21 to 193 (KTLKSGNVND…KKASHLVATS (173 aa)). Residues 201 to 396 (RYVQLVIVAD…HNPPCILNQA (196 aa)) enclose the Peptidase M12B domain. 3 disulfide bridges follow: Cys311/Cys391, Cys351/Cys375, and Cys353/Cys358. Residue His336 participates in Zn(2+) binding. The active site involves Glu337. Zn(2+) is bound by residues His340 and His346. Positions 410–431 (ELLQNSVNPCYDPVTCQPKEKE) are excised as a propeptide. A Disintegrin domain is found at 417-478 (NPCYDPVTCQ…DCPRNPYKGE (62 aa)). 4 disulfide bridges follow: Cys433–Cys442, Cys438–Cys463, Cys439–Cys468, and Cys451–Cys470. The Cell attachment site signature appears at 455–457 (RGD). A propeptide spanning residues 482-494 (MEWPAPAKGSVLM) is cleaved from the precursor.

It belongs to the venom metalloproteinase (M12B) family. P-II subfamily. P-IIa sub-subfamily. Monomer (disintegrin). In terms of tissue distribution, expressed by the venom gland.

It is found in the secreted. Impairs hemostasis in the envenomed animal. In terms of biological role, inhibits ADP-induced platelet aggregation (IC(50)=168 nM). Inhibits alpha-5/beta-1 (ITGA5/ITGB1) integrin and induces the expression of a ligand-induced binding site epitope on beta-1 integrin subunit. Has a direct chemotactic stimulus on human neutrophils in vitro. This chain is Zinc metalloproteinase/disintegrin, found in Echis ocellatus (Ocellated saw-scaled viper).